The primary structure comprises 619 residues: Type VI secretion system component TssF1 (619 aa).

In terms of assembly, interacts with TssA1.

Its function is as follows. Core component of the H1 type VI (H1-T6SS) secretion system that plays a role in the release of toxins targeting both eukaryotic and prokaryotic species. The protein is Type VI secretion system component TssF1 of Pseudomonas aeruginosa (strain ATCC 15692 / DSM 22644 / CIP 104116 / JCM 14847 / LMG 12228 / 1C / PRS 101 / PAO1).